Reading from the N-terminus, the 502-residue chain is Aspartyl/glutamyl-tRNA(Asn/Gln) amidotransferase subunit B (502 aa).

The protein belongs to the GatB/GatE family. GatB subfamily. In terms of assembly, heterotrimer of A, B and C subunits.

It carries out the reaction L-glutamyl-tRNA(Gln) + L-glutamine + ATP + H2O = L-glutaminyl-tRNA(Gln) + L-glutamate + ADP + phosphate + H(+). The enzyme catalyses L-aspartyl-tRNA(Asn) + L-glutamine + ATP + H2O = L-asparaginyl-tRNA(Asn) + L-glutamate + ADP + phosphate + 2 H(+). Allows the formation of correctly charged Asn-tRNA(Asn) or Gln-tRNA(Gln) through the transamidation of misacylated Asp-tRNA(Asn) or Glu-tRNA(Gln) in organisms which lack either or both of asparaginyl-tRNA or glutaminyl-tRNA synthetases. The reaction takes place in the presence of glutamine and ATP through an activated phospho-Asp-tRNA(Asn) or phospho-Glu-tRNA(Gln). This chain is Aspartyl/glutamyl-tRNA(Asn/Gln) amidotransferase subunit B, found in Ruegeria sp. (strain TM1040) (Silicibacter sp.).